The following is a 224-amino-acid chain: UPF0758 protein VP0184 (224 aa).

Residues 102–224 form the MPN domain; it reads ALTSPEQTKL…SVSFAERGWI (123 aa). Zn(2+)-binding residues include H173, H175, and D186. A JAMM motif motif is present at residues 173–186; sequence HNHPSGVAEPSQAD.

The protein belongs to the UPF0758 family.

The sequence is that of UPF0758 protein VP0184 from Vibrio parahaemolyticus serotype O3:K6 (strain RIMD 2210633).